The following is a 970-amino-acid chain: MASVLLPLPQVFVLFDYRRSRKESSFPRAVYNSNSISSNSTNANHFLRRISNFCETGDLDKSFRTVQEFVGDDESSSDAFLLVREALGLLLQASGKRKDIEMGRKIHQLVSGSTRLRNDDVLCTRIITMYAMCGSPDDSRFVFDALRSKNLFQWNAVISSYSRNELYDEVLETFIEMISTTDLLPDHFTYPCVIKACAGMSDVGIGLAVHGLVVKTGLVEDVFVGNALVSFYGTHGFVTDALQLFDIMPERNLVSWNSMIRVFSDNGFSEESFLLLGEMMEENGDGAFMPDVATLVTVLPVCAREREIGLGKGVHGWAVKLRLDKELVLNNALMDMYSKCGCITNAQMIFKMNNNKNVVSWNTMVGGFSAEGDTHGTFDVLRQMLAGGEDVKADEVTILNAVPVCFHESFLPSLKELHCYSLKQEFVYNELVANAFVASYAKCGSLSYAQRVFHGIRSKTVNSWNALIGGHAQSNDPRLSLDAHLQMKISGLLPDSFTVCSLLSACSKLKSLRLGKEVHGFIIRNWLERDLFVYLSVLSLYIHCGELCTVQALFDAMEDKSLVSWNTVITGYLQNGFPDRALGVFRQMVLYGIQLCGISMMPVFGACSLLPSLRLGREAHAYALKHLLEDDAFIACSLIDMYAKNGSITQSSKVFNGLKEKSTASWNAMIMGYGIHGLAKEAIKLFEEMQRTGHNPDDLTFLGVLTACNHSGLIHEGLRYLDQMKSSFGLKPNLKHYACVIDMLGRAGQLDKALRVVAEEMSEEADVGIWKSLLSSCRIHQNLEMGEKVAAKLFELEPEKPENYVLLSNLYAGLGKWEDVRKVRQRMNEMSLRKDAGCSWIELNRKVFSFVVGERFLDGFEEIKSLWSILEMKISKMGYRPDTMSVQHDLSEEEKIEQLRGHSEKLALTYGLIKTSEGTTIRVYKNLRICVDCHNAAKLISKVMEREIVVRDNKRFHHFKNGVCSCGDYW.

19 PPR repeats span residues 119-149 (DDVL…LRSK), 150-185 (NLFQ…DLLP), 186-220 (DHFT…GLVE), 221-251 (DVFV…MPER), 252-282 (NLVS…MMEE), 291-325 (DVAT…RLDK), 326-356 (ELVL…NNNK), 357-391 (NVVS…GEDV), 394-428 (DEVT…EFVY), 429-459 (NELV…IRSK), 460-494 (TVNS…GLLP), 495-529 (DSFT…WLER), 530-560 (DLFV…MEDK), 561-595 (SLVS…GIQL), 597-630 (GISM…LLED), 631-661 (DAFI…LKEK), 662-696 (STAS…GHNP), 697-727 (DDLT…MKSS), and 733-764 (NLKH…MSEE). The type E motif stretch occupies residues 770 to 845 (WKSLLSSCRI…AGCSWIELNR (76 aa)). The type E(+) motif stretch occupies residues 846-875 (KVFSFVVGERFLDGFEEIKSLWSILEMKIS). The type DYW motif stretch occupies residues 876-970 (KMGYRPDTMS…NGVCSCGDYW (95 aa)).

This sequence belongs to the PPR family. PCMP-H subfamily.

The polypeptide is Pentatricopeptide repeat-containing protein At1g18485 (PCMP-H8) (Arabidopsis thaliana (Mouse-ear cress)).